The primary structure comprises 281 residues: Protein EMBRYO DEFECTIVE 1674 (281 aa).

Polar residues-rich tracts occupy residues Met-1–Ser-14 and Pro-24–Ser-41. The segment at Met-1–Thr-47 is disordered. An SANTA domain is found at Val-66–Tyr-153.

In terms of biological role, required for normal embryo development. This Arabidopsis thaliana (Mouse-ear cress) protein is Protein EMBRYO DEFECTIVE 1674.